Consider the following 258-residue polypeptide: Synaptosomal-associated protein 29 (258 aa).

Residues 1-41 (MSAYPKSYNPFDDDGEDEGARPAPWRDARDLPDGPDAPADR) form a disordered region. The segment covering 18–32 (EGARPAPWRDARDLP) has biased composition (basic and acidic residues). Positions 76–107 (ASSEELARQRGVLERTEKMVDKMDQDLKISQK) form a coiled coil. A phosphoserine mark is found at Ser-77, Ser-78, and Ser-114. Residues 127–190 (PVETPPEQNG…GSAVSTDAYP (64 aa)) are disordered. Residues Thr-130 and Thr-137 each carry the phosphothreonine modification. Residues 132 to 144 (PEQNGTLASQPNS) show a composition bias toward polar residues. Residues Ser-163, Ser-182, Ser-185, Ser-204, and Ser-210 each carry the phosphoserine modification. The region spanning 196 to 258 (QAYHQKIDSN…KSTERKVRQL (63 aa)) is the t-SNARE coiled-coil homology domain.

It belongs to the SNAP-25 family. As to quaternary structure, forms a SNARE complex, composed of VAMP8, SNAP29 and STX17, involved in fusion of autophagosome with lysosome. Interacts with multiple syntaxins including STX6. Interacts with EIPR1. Interacts with STX17; this interaction is increased in the absence of TMEM39A.

The protein localises to the cytoplasm. It localises to the golgi apparatus membrane. Its subcellular location is the cytoplasmic vesicle. The protein resides in the autophagosome membrane. It is found in the cell projection. The protein localises to the cilium membrane. SNAREs, soluble N-ethylmaleimide-sensitive factor-attachment protein receptors, are essential proteins for fusion of cellular membranes. SNAREs localized on opposing membranes assemble to form a trans-SNARE complex, an extended, parallel four alpha-helical bundle that drives membrane fusion. SNAP29 is a SNARE involved in autophagy through the direct control of autophagosome membrane fusion with the lysososome membrane. Also plays a role in ciliogenesis by regulating membrane fusions. The sequence is that of Synaptosomal-associated protein 29 from Pongo abelii (Sumatran orangutan).